The sequence spans 127 residues: Glycine cleavage system H protein (127 aa).

A Lipoyl-binding domain is found at 22 to 104 (AVVIGITHFA…YEGAWMVKVE (83 aa)). Residue K63 is modified to N6-lipoyllysine.

It belongs to the GcvH family. In terms of assembly, the glycine cleavage system is composed of four proteins: P, T, L and H. (R)-lipoate serves as cofactor.

Functionally, the glycine cleavage system catalyzes the degradation of glycine. The H protein shuttles the methylamine group of glycine from the P protein to the T protein. Its function is as follows. Is also involved in protein lipoylation via its role as an octanoyl/lipoyl carrier protein intermediate. The protein is Glycine cleavage system H protein of Bacillus mycoides (strain KBAB4) (Bacillus weihenstephanensis).